The chain runs to 21 residues: Protein YmjD (21 aa).

This Escherichia coli (strain K12) protein is Protein YmjD (ymjD).